Reading from the N-terminus, the 50-residue chain is Large ribosomal subunit protein bL33A (50 aa).

It belongs to the bacterial ribosomal protein bL33 family.

The protein is Large ribosomal subunit protein bL33A of Streptococcus thermophilus (strain CNRZ 1066).